The following is a 725-amino-acid chain: Homeobox protein unc-62 (725 aa).

The MEIS N-terminal domain occupies Ser133–Ala218. Disordered stretches follow at residues Gly214–Pro258, Ser295–Thr317, Val329–Met359, Ser386–Gln419, Val491–Val555, and Ile615–Thr661. Low complexity predominate over residues Ser219–Pro239. Over residues His388–His400 the composition is skewed to basic residues. The segment covering Ser498–Lys508 has biased composition (low complexity). Over residues Leu541–Asn550 the composition is skewed to polar residues. Residues Lys552 to Met614 constitute a DNA-binding region (homeobox; TALE-type).

This sequence belongs to the TALE/MEIS homeobox family.

The protein resides in the nucleus. Functionally, acts redundantly with ceh-20 and ceh-40 to perform overlapping roles during embryogenesis. Required for postembryonic development of the ectoderm, including the Q, V and P cell lineages, playing a crucial role in ensuring that these cells and their descendants undergo their invariant patterns of cell division, migration, fusion and morphogenesis. Has a role in the mig-13 pathway to promote anterior migration of neuroblasts in the Q lineage. Required for multiple roles in regulating vulva development. The chain is Homeobox protein unc-62 (unc-62) from Caenorhabditis briggsae.